Reading from the N-terminus, the 226-residue chain is Fibronectin type III domain-containing protein 9 (226 aa).

The 101-residue stretch at 1 to 101 folds into the Fibronectin type-III domain; that stretch reads MNIEVGNVSH…FHTLDKSPLA (101 aa). Residues 113-133 form a helical membrane-spanning segment; that stretch reads LWVLMAILLACFTAVLAFICL.

It localises to the membrane. The polypeptide is Fibronectin type III domain-containing protein 9 (Fndc9) (Mus musculus (Mouse)).